The chain runs to 214 residues: Pyrrolidone-carboxylate peptidase (214 aa).

Active-site residues include Glu-78, Cys-141, and His-165.

The protein belongs to the peptidase C15 family. In terms of assembly, homotetramer.

It is found in the cytoplasm. The enzyme catalyses Release of an N-terminal pyroglutamyl group from a polypeptide, the second amino acid generally not being Pro.. Its function is as follows. Removes 5-oxoproline from various penultimate amino acid residues except L-proline. This is Pyrrolidone-carboxylate peptidase from Streptococcus pneumoniae (strain 70585).